A 123-amino-acid chain; its full sequence is uncharacterized protein (123 aa).

The helical transmembrane segment at 5–25 threads the bilayer; it reads GTLVIIFAIVLILCIMLLFFY. A disordered region spans residues 32-53; the sequence is KPSVLPPPIPPPTPPPSKKKYD. The segment covering 35 to 47 has biased composition (pro residues); sequence VLPPPIPPPTPPP.

This sequence belongs to the asfivirus CP123L family.

Its subcellular location is the host membrane. It is found in the virion. This is an uncharacterized protein from Ornithodoros (relapsing fever ticks).